The following is a 97-amino-acid chain: MANNKSAKKRIQIAERNRLNNKSYKSTVRTLTKKTLENCEKYKKEPNEDNMNLVKTSLNKAFSLIDKAVKKNVLHKNNGANKKSKINKFVKTALNIK.

It belongs to the bacterial ribosomal protein bS20 family.

In terms of biological role, binds directly to 16S ribosomal RNA. This Prochlorococcus marinus (strain MIT 9215) protein is Small ribosomal subunit protein bS20.